The chain runs to 68 residues: uncharacterized protein (68 aa).

The N-terminal stretch at 1–27 (MKGLLCFIYILSAILIGCVFLNKDVEA) is a signal peptide.

This is an uncharacterized protein from Invertebrate iridescent virus 6 (IIV-6).